The chain runs to 141 residues: Photosystem I reaction center subunit IV A, chloroplastic (141 aa).

Residues 1–49 constitute a chloroplast transit peptide; the sequence is MASCNMASAASNFLVATPNVASNTNTSRTTMLFFSSKNYGSTAPRLVVR. The span at 57–73 shows a compositional bias: low complexity; sequence PAAAATAEPAEAPVKAA. Residues 57-83 form a disordered region; that stretch reads PAAAATAEPAEAPVKAAKPPPIGPKRG.

It belongs to the PsaE family. 2 isoforms exists (ratio 1:1). With or without the N-terminal alanine.

Its subcellular location is the plastid. The protein resides in the chloroplast thylakoid membrane. Functionally, stabilizes the interaction between PsaC and the PSI core, assists the docking of the ferredoxin to PSI and interacts with ferredoxin-NADP oxidoreductase. The polypeptide is Photosystem I reaction center subunit IV A, chloroplastic (PSAEA) (Nicotiana sylvestris (Wood tobacco)).